A 526-amino-acid chain; its full sequence is Exodeoxyribonuclease 7 large subunit (526 aa).

The interval 499 to 526 (AGEDGTPSQAPKKRPARAGEPTKQGSLF) is disordered.

The protein belongs to the XseA family. As to quaternary structure, heterooligomer composed of large and small subunits.

Its subcellular location is the cytoplasm. It catalyses the reaction Exonucleolytic cleavage in either 5'- to 3'- or 3'- to 5'-direction to yield nucleoside 5'-phosphates.. Functionally, bidirectionally degrades single-stranded DNA into large acid-insoluble oligonucleotides, which are then degraded further into small acid-soluble oligonucleotides. The chain is Exodeoxyribonuclease 7 large subunit from Sinorhizobium medicae (strain WSM419) (Ensifer medicae).